A 515-amino-acid chain; its full sequence is Glycosyltransferase family 92 protein F59C6.8 (515 aa).

A helical membrane pass occupies residues 18-38 (LFIFIAVCLGFLIAVTILAGL). One can recognise a GT92 domain in the interval 163–456 (RKVVACFSPL…IEVCYNRIFY (294 aa)).

It belongs to the glycosyltransferase 92 family.

It is found in the membrane. This Caenorhabditis elegans protein is Glycosyltransferase family 92 protein F59C6.8.